Consider the following 817-residue polypeptide: Leucine--tRNA ligase (817 aa).

The 'HIGH' region signature appears at 42 to 52 (PYPSGKLHMGH). Residues 576-580 (KMSKS) carry the 'KMSKS' region motif. Lys-579 is a binding site for ATP.

Belongs to the class-I aminoacyl-tRNA synthetase family.

It localises to the cytoplasm. It carries out the reaction tRNA(Leu) + L-leucine + ATP = L-leucyl-tRNA(Leu) + AMP + diphosphate. This chain is Leucine--tRNA ligase, found in Methylobacillus flagellatus (strain ATCC 51484 / DSM 6875 / VKM B-1610 / KT).